A 317-amino-acid polypeptide reads, in one-letter code: Taste receptor type 2 member 7 (317 aa).

The Extracellular portion of the chain corresponds to 1 to 9 (MTDKVQTTL). The helical transmembrane segment at 10 to 30 (LFLAIGEFSVGILGNAFIGLV) threads the bilayer. The Cytoplasmic portion of the chain corresponds to 31–55 (NCMDWVKKRKIASIDLILTSLAISR). A helical transmembrane segment spans residues 56-76 (ICLLCVILLDCFMLVLYPDVY). Over 77–94 (ATGKQMRIIDFFWTLTNH) the chain is Extracellular. Residues 95-115 (LSIWFATCLSIYYFFKIANFF) traverse the membrane as a helical segment. At 116 to 128 (HPLFLWMKWRIDR) the chain is on the cytoplasmic side. The helical transmembrane segment at 129–149 (VISWILLGCMVLSVFINLPAT) threads the bilayer. At 150 to 187 (ENLNADFRRCVKAKRKTNLTWSCRVTKAQHASTKLFLN) the chain is on the extracellular side. Asparagine 167 carries an N-linked (GlcNAc...) asparagine glycan. A helical membrane pass occupies residues 188–208 (LVTLLPFSVCLVSFFLLILSL). The Cytoplasmic portion of the chain corresponds to 209–235 (WRHIRRMQLSATGCRDPSTEAHVRALK). The chain crosses the membrane as a helical span at residues 236-256 (AVISFLFLFIAYYLSFLIATS). The Extracellular segment spans residues 257–266 (SYFIPETELA). Residues 267–287 (VIFGEFIALIYPSSHSFILIL) traverse the membrane as a helical segment. At 288–317 (GNNKLRRASLKVLWTVMSILKGRKFQQKQI) the chain is on the cytoplasmic side.

This sequence belongs to the G-protein coupled receptor T2R family.

The protein localises to the membrane. Its function is as follows. Gustducin-coupled receptor implicated in the perception of bitter compounds in the oral cavity and the gastrointestinal tract. Signals through PLCB2 and the calcium-regulated cation channel TRPM5. The protein is Taste receptor type 2 member 7 (TAS2R7) of Papio hamadryas (Hamadryas baboon).